The sequence spans 433 residues: Serine hydroxymethyltransferase (433 aa).

Residues leucine 132 and 136 to 138 contribute to the (6S)-5,6,7,8-tetrahydrofolate site; that span reads GHL. Lysine 241 carries the post-translational modification N6-(pyridoxal phosphate)lysine.

The protein belongs to the SHMT family. In terms of assembly, homodimer. Pyridoxal 5'-phosphate is required as a cofactor.

The protein resides in the cytoplasm. It catalyses the reaction (6R)-5,10-methylene-5,6,7,8-tetrahydrofolate + glycine + H2O = (6S)-5,6,7,8-tetrahydrofolate + L-serine. Its pathway is one-carbon metabolism; tetrahydrofolate interconversion. It participates in amino-acid biosynthesis; glycine biosynthesis; glycine from L-serine: step 1/1. Its function is as follows. Catalyzes the reversible interconversion of serine and glycine with tetrahydrofolate (THF) serving as the one-carbon carrier. This reaction serves as the major source of one-carbon groups required for the biosynthesis of purines, thymidylate, methionine, and other important biomolecules. Also exhibits THF-independent aldolase activity toward beta-hydroxyamino acids, producing glycine and aldehydes, via a retro-aldol mechanism. The sequence is that of Serine hydroxymethyltransferase from Methylobacterium sp. (strain 4-46).